The primary structure comprises 429 residues: Ribosomal RNA small subunit methyltransferase B (429 aa).

Residues 254-260 (CAAPGGK), D277, D303, and D322 each bind S-adenosyl-L-methionine. The active-site Nucleophile is the C375. Positions 397 to 419 (ALSETGTPDQPGQQNLPGGEEGD) are disordered. The span at 400 to 412 (ETGTPDQPGQQNL) shows a compositional bias: polar residues.

Belongs to the class I-like SAM-binding methyltransferase superfamily. RsmB/NOP family.

It localises to the cytoplasm. The enzyme catalyses cytidine(967) in 16S rRNA + S-adenosyl-L-methionine = 5-methylcytidine(967) in 16S rRNA + S-adenosyl-L-homocysteine + H(+). Its function is as follows. Specifically methylates the cytosine at position 967 (m5C967) of 16S rRNA. In Salmonella paratyphi B (strain ATCC BAA-1250 / SPB7), this protein is Ribosomal RNA small subunit methyltransferase B.